We begin with the raw amino-acid sequence, 401 residues long: Divinyl chlorophyllide a 8-vinyl-reductase, chloroplastic (401 aa).

Residues methionine 1 to leucine 10 show a composition bias toward polar residues. Residues methionine 1–arginine 26 form a disordered region. A chloroplast-targeting transit peptide spans methionine 1–proline 54.

Its subcellular location is the plastid. It localises to the chloroplast. It catalyses the reaction protochlorophyllide a + NADP(+) = 3,8-divinyl protochlorophyllide a + NADPH + H(+). The protein operates within porphyrin-containing compound metabolism; chlorophyll biosynthesis. Catalyzes the conversion of divinyl chlorophyllide to monovinyl chlorophyllide. Reduces the 8-vinyl group of the tetrapyrrole to an ethyl group using NADPH as the reductant. Can use (3,8-divinyl)-chlorophyllide a (DV-Chlidea) &gt; (3,8-divinyl)-chlorophyll a (DV-Chla) &gt; (3,8-divinyl)-protochlorophyllide a (DV-Pchlidea) &gt; (3,8-divinyl)-magnesium-protoporphyrin IX monomethyl ester (DV-MPE) &gt; (3,8-divinyl)-magnesium-protoporphyrin IX (DV-Mg-Proto) as substrates. This Zea mays (Maize) protein is Divinyl chlorophyllide a 8-vinyl-reductase, chloroplastic (DVR).